The primary structure comprises 500 residues: V-type proton ATPase subunit B (500 aa).

It belongs to the ATPase alpha/beta chains family. As to quaternary structure, V-ATPase is a heteromultimeric enzyme composed of a peripheral catalytic V1 complex (main components: subunits A, B, C, D, E, and F) attached to an integral membrane V0 proton pore complex (main component: the proteolipid protein).

Its function is as follows. Non-catalytic subunit of the peripheral V1 complex of vacuolar ATPase. V-ATPase is responsible for acidifying a variety of intracellular compartments in eukaryotic cells. This is V-type proton ATPase subunit B from Cyanidium caldarium (Red alga).